The primary structure comprises 33 residues: Photosystem II reaction center protein Psb30 (33 aa).

The chain crosses the membrane as a helical span at residues 5–25 (VVAQLTVLALIVVSGPLVIGL).

Belongs to the Psb30/Ycf12 family. In terms of assembly, PSII is composed of 1 copy each of membrane proteins PsbA, PsbB, PsbC, PsbD, PsbE, PsbF, PsbH, PsbI, PsbJ, PsbK, PsbL, PsbM, PsbT, PsbX, PsbY, PsbZ, Psb30/Ycf12, peripheral proteins of the oxygen-evolving complex and a large number of cofactors. It forms dimeric complexes.

It localises to the plastid. Its subcellular location is the chloroplast thylakoid membrane. Functionally, a core subunit of photosystem II (PSII), probably helps stabilize the reaction center. This is Photosystem II reaction center protein Psb30 from Zygnema circumcarinatum (Green alga).